A 222-amino-acid polypeptide reads, in one-letter code: Putative auxin response factor 23 (222 aa).

The TF-B3 DNA-binding region spans 126-222 (FTKVLTASDT…ETGELRVGIR (97 aa)).

It belongs to the ARF family. Homo and heterodimers.

The protein resides in the nucleus. Functionally, auxin response factors (ARFs) are transcriptional factors that binds specifically to the DNA sequence 5'-TGTCTC-3' found in the auxin-responsive promoter elements (AuxREs). Could act as transcriptional activator or repressor. Formation of heterodimers with Aux/IAA proteins may alter their ability to modulate early auxin response genes expression. The sequence is that of Putative auxin response factor 23 (ARF23) from Arabidopsis thaliana (Mouse-ear cress).